A 652-amino-acid polypeptide reads, in one-letter code: Pesticidal crystal protein Cry3Bb (652 aa).

The span at 1-12 (MNPNNRSEHDTI) shows a compositional bias: basic and acidic residues. Disordered stretches follow at residues 1–33 (MNPN…ADNP) and 433–465 (KNET…ETTD). Positions 14–33 (VTPNSELQTNHNQYPLADNP) are enriched in polar residues.

Belongs to the delta endotoxin family. In terms of assembly, monomer.

In terms of biological role, promotes colloidosmotic lysis by binding to the midgut epithelial cells of Coleoptera. Has moderate level of toxicity to southern corn rootworm. This is Pesticidal crystal protein Cry3Bb (cry3Bb) from Bacillus thuringiensis.